We begin with the raw amino-acid sequence, 378 residues long: Probable pectin lyase C (378 aa).

The N-terminal stretch at 1–18 is a signal peptide; that stretch reads MKVPFLQLLCLNAALASA. Disulfide bonds link Cys-81–Cys-100 and Cys-90–Cys-220. N-linked (GlcNAc...) asparagine glycosylation occurs at Asn-123. Arg-250 is a catalytic residue. Cys-316 and Cys-324 are disulfide-bonded.

It belongs to the polysaccharide lyase 1 family.

It localises to the secreted. It catalyses the reaction Eliminative cleavage of (1-&gt;4)-alpha-D-galacturonan methyl ester to give oligosaccharides with 4-deoxy-6-O-methyl-alpha-D-galact-4-enuronosyl groups at their non-reducing ends.. Pectinolytic enzymes consist of four classes of enzymes: pectin lyase, polygalacturonase, pectin methylesterase and rhamnogalacturonase. Among pectinolytic enzymes, pectin lyase is the most important in depolymerization of pectin, since it cleaves internal glycosidic bonds of highly methylated pectins. The polypeptide is Probable pectin lyase C (pelC) (Aspergillus niger).